The chain runs to 644 residues: Exoribonuclease 2 (644 aa).

Positions 189–516 (RQDLTALNFV…NHRLLKAAIK (328 aa)) constitute an RNB domain. An S1 motif domain is found at 561 to 643 (DTRFAAEIID…ETRSIIARPV (83 aa)).

It belongs to the RNR ribonuclease family. RNase II subfamily.

It is found in the cytoplasm. It carries out the reaction Exonucleolytic cleavage in the 3'- to 5'-direction to yield nucleoside 5'-phosphates.. In terms of biological role, involved in mRNA degradation. Hydrolyzes single-stranded polyribonucleotides processively in the 3' to 5' direction. This is Exoribonuclease 2 from Escherichia fergusonii (strain ATCC 35469 / DSM 13698 / CCUG 18766 / IAM 14443 / JCM 21226 / LMG 7866 / NBRC 102419 / NCTC 12128 / CDC 0568-73).